We begin with the raw amino-acid sequence, 106 residues long: Small ribosomal subunit protein bS18 (106 aa).

Positions 1 to 39 (MNGRNNDMGRNGGADYDDRDFGRTPDLNADAPGRRRTGR) are disordered.

This sequence belongs to the bacterial ribosomal protein bS18 family. As to quaternary structure, part of the 30S ribosomal subunit. Forms a tight heterodimer with protein bS6.

In terms of biological role, binds as a heterodimer with protein bS6 to the central domain of the 16S rRNA, where it helps stabilize the platform of the 30S subunit. In Sorangium cellulosum (strain So ce56) (Polyangium cellulosum (strain So ce56)), this protein is Small ribosomal subunit protein bS18.